The primary structure comprises 635 residues: Biosynthetic arginine decarboxylase (635 aa).

Position 100 is an N6-(pyridoxal phosphate)lysine (Lys100). Residue 282-292 coordinates substrate; it reads LDIGGGLGVDY.

It belongs to the Orn/Lys/Arg decarboxylase class-II family. SpeA subfamily. It depends on Mg(2+) as a cofactor. Pyridoxal 5'-phosphate is required as a cofactor.

It catalyses the reaction L-arginine + H(+) = agmatine + CO2. The protein operates within amine and polyamine biosynthesis; agmatine biosynthesis; agmatine from L-arginine: step 1/1. Catalyzes the biosynthesis of agmatine from arginine. This is Biosynthetic arginine decarboxylase from Geotalea uraniireducens (strain Rf4) (Geobacter uraniireducens).